The chain runs to 451 residues: ACT domain-containing protein ACR4 (451 aa).

4 consecutive ACT domains span residues 35–118, 123–200, 259–335, and 337–416; these read VIRV…VIPS, VIEL…NTPR, VVTV…VSEG, and KLEL…QEQQ. The tract at residues 409–428 is disordered; the sequence is KNNPQEQQQRQKSPSHESPT. Residues 410 to 420 are compositionally biased toward polar residues; the sequence is NNPQEQQQRQK.

Highly expressed in flowers and at lower levels in leaves and siliques.

In terms of biological role, may bind amino acids. The sequence is that of ACT domain-containing protein ACR4 from Arabidopsis thaliana (Mouse-ear cress).